The sequence spans 229 residues: 5'-methylthioadenosine/S-adenosylhomocysteine nucleosidase (229 aa).

The active-site Proton acceptor is Glu-12. Substrate is bound by residues Gly-78, Ile-152, and Met-173–Glu-174. The active-site Proton donor is the Asp-197.

Belongs to the PNP/UDP phosphorylase family. MtnN subfamily.

The catalysed reaction is S-adenosyl-L-homocysteine + H2O = S-(5-deoxy-D-ribos-5-yl)-L-homocysteine + adenine. It catalyses the reaction S-methyl-5'-thioadenosine + H2O = 5-(methylsulfanyl)-D-ribose + adenine. The enzyme catalyses 5'-deoxyadenosine + H2O = 5-deoxy-D-ribose + adenine. Its pathway is amino-acid biosynthesis; L-methionine biosynthesis via salvage pathway; S-methyl-5-thio-alpha-D-ribose 1-phosphate from S-methyl-5'-thioadenosine (hydrolase route): step 1/2. In terms of biological role, catalyzes the irreversible cleavage of the glycosidic bond in both 5'-methylthioadenosine (MTA) and S-adenosylhomocysteine (SAH/AdoHcy) to adenine and the corresponding thioribose, 5'-methylthioribose and S-ribosylhomocysteine, respectively. Also cleaves 5'-deoxyadenosine, a toxic by-product of radical S-adenosylmethionine (SAM) enzymes, into 5-deoxyribose and adenine. This is 5'-methylthioadenosine/S-adenosylhomocysteine nucleosidase from Histophilus somni (strain 2336) (Haemophilus somnus).